We begin with the raw amino-acid sequence, 73 residues long: Large ribosomal subunit protein bL27c (73 aa).

The protein belongs to the bacterial ribosomal protein bL27 family.

It localises to the plastid. The protein localises to the chloroplast. The chain is Large ribosomal subunit protein bL27c (rpl27) from Chrysochromulina alifera (Plankton alga).